We begin with the raw amino-acid sequence, 1007 residues long: Probable beta-galactosidase A (1007 aa).

The first 18 residues, 1–18, serve as a signal peptide directing secretion; that stretch reads MRLLPVWTAALLAAQAAG. 4 residues coordinate substrate: Tyr-96, Asn-140, Ala-141, and Glu-142. The N-linked (GlcNAc...) asparagine glycan is linked to Asn-156. Residue Asn-199 coordinates substrate. Glu-200 acts as the Proton donor in catalysis. An intrachain disulfide couples Cys-205 to Cys-206. Position 260 (Tyr-260) interacts with substrate. A disulfide bridge links Cys-266 with Cys-315. Residue Glu-298 is the Nucleophile of the active site. Substrate is bound at residue Tyr-364. N-linked (GlcNAc...) asparagine glycans are attached at residues Asn-405, Asn-422, Asn-621, Asn-740, Asn-775, and Asn-914.

The protein belongs to the glycosyl hydrolase 35 family.

The protein localises to the secreted. It catalyses the reaction Hydrolysis of terminal non-reducing beta-D-galactose residues in beta-D-galactosides.. In terms of biological role, cleaves beta-linked terminal galactosyl residues from gangliosides, glycoproteins, and glycosaminoglycans. The sequence is that of Probable beta-galactosidase A (lacA) from Emericella nidulans (strain FGSC A4 / ATCC 38163 / CBS 112.46 / NRRL 194 / M139) (Aspergillus nidulans).